A 149-amino-acid chain; its full sequence is Tetracenomycin polyketide synthase protein TcmJ (149 aa).

One can recognise a Cupin type-2 domain in the interval 51 to 117 (HIELAPGESV…NRGNVPARVV (67 aa)). Residues 127–149 (PELGHVDTEPVPNPAAAPPKVGG) form a disordered region.

In terms of assembly, the tetracenomycin polyketide synthase (TCM PKS) is composed of a ketosynthase complex (TcmKL), an acyl carrier protein (TcmM), a cyclase (TcmN) and a probable second cyclase (TcmJ).

It carries out the reaction 10 malonyl-CoA + 8 H(+) = tetracenomycin F2 + 10 CO2 + 10 CoA + 2 H2O. Its pathway is antibiotic biosynthesis; tetracenomycin C biosynthesis. In terms of biological role, involved in the biosynthesis of tetracenomycin C (TCM C). Part of a type II polyketide synthase (PKS) that catalyzes the synthesis of tetracenomycin F2 (TCM F2), a precursor of TCM C, from malonyl-CoA. TcmJ, while not absolutely required, greatly increases the tetracenomycin F2 production. It probably acts as a cyclase. In Streptomyces glaucescens, this protein is Tetracenomycin polyketide synthase protein TcmJ.